Consider the following 364-residue polypeptide: Anthranilate phosphoribosyltransferase 1 (364 aa).

5-phospho-alpha-D-ribose 1-diphosphate-binding positions include glycine 102, 105 to 106 (GD), threonine 110, 112 to 115 (NIST), 130 to 138 (KHGNRSASS), and serine 142. Glycine 102 is a binding site for anthranilate. Residue serine 114 participates in Mg(2+) binding. Asparagine 133 is a binding site for anthranilate. Arginine 188 contributes to the anthranilate binding site. Mg(2+) is bound by residues aspartate 247 and glutamate 248.

Belongs to the anthranilate phosphoribosyltransferase family. In terms of assembly, homodimer. Mg(2+) serves as cofactor.

It catalyses the reaction N-(5-phospho-beta-D-ribosyl)anthranilate + diphosphate = 5-phospho-alpha-D-ribose 1-diphosphate + anthranilate. It functions in the pathway amino-acid biosynthesis; L-tryptophan biosynthesis; L-tryptophan from chorismate: step 2/5. Its function is as follows. Catalyzes the transfer of the phosphoribosyl group of 5-phosphorylribose-1-pyrophosphate (PRPP) to anthranilate to yield N-(5'-phosphoribosyl)-anthranilate (PRA). This Nostoc sp. (strain PCC 7120 / SAG 25.82 / UTEX 2576) protein is Anthranilate phosphoribosyltransferase 1.